We begin with the raw amino-acid sequence, 141 residues long: Hemoglobin subunit beta (141 aa).

The region spanning 2 to 141 (HWSEVELHEI…VVDAISKEYH (140 aa)) is the Globin domain. Heme b is bound by residues His58 and His87.

The protein belongs to the globin family. In terms of assembly, heterotetramer of two alpha chains and two beta chains. In terms of tissue distribution, red blood cells.

Functionally, involved in oxygen transport from the lung to the various peripheral tissues. This chain is Hemoglobin subunit beta (HBB), found in Heterodontus portusjacksoni (Port Jackson shark).